Consider the following 35-residue polypeptide: Phospholipase A2 bitanarin (35 aa).

The protein belongs to the phospholipase A2 family. Group II subfamily. As to quaternary structure, monomer. Ca(2+) serves as cofactor. In terms of processing, contains 14 disulfide bonds. As to expression, expressed by the venom gland.

It localises to the secreted. It carries out the reaction a 1,2-diacyl-sn-glycero-3-phosphocholine + H2O = a 1-acyl-sn-glycero-3-phosphocholine + a fatty acid + H(+). In terms of biological role, snake venom phospholipase A2 (PLA2) that is the first competitive blocker of nicotinic acetylcholine receptors (nAChRs). Competes with alpha-bungarotoxin for binding to nAChRs and acetylcholine binding proteins (AChBPs) and blocks acetylcholine-elicited current. PLA2 catalyzes the calcium-dependent hydrolysis of the 2-acyl groups in 3-sn-phosphoglycerides. In Bitis arietans (African puff adder), this protein is Phospholipase A2 bitanarin.